The sequence spans 95 residues: Defensin-A3 (95 aa).

The first 19 residues, 1-19 (MRTLGLLLALLFLAAQTPA), serve as a signal peptide directing secretion. Positions 20–61 (QLMGEEAEEATGRPEATEAQEAAAALMAARAADRHVTDPEQQ) are excised as a propeptide. 3 disulfides stabilise this stretch: C66/C93, C68/C82, and C72/C92.

It belongs to the alpha-defensin family. As to expression, highly expressed in spleen, and expressed at lower levels in intestin and lung.

It is found in the secreted. In terms of biological role, has antimicrobial activity. The protein is Defensin-A3 of Ornithorhynchus anatinus (Duckbill platypus).